Here is a 93-residue protein sequence, read N- to C-terminus: uncharacterized protein (93 aa).

Residues Trp68–Ile88 traverse the membrane as a helical segment.

Its subcellular location is the membrane. This is an uncharacterized protein from Mycoplasma pneumoniae (strain ATCC 29342 / M129 / Subtype 1) (Mycoplasmoides pneumoniae).